Reading from the N-terminus, the 387-residue chain is MEVLAAETISQQERLQAIAEKRRRQAEVENRRRQLEDDRRQLQHLKSKALRERWLLEGTPSSASEGDEDMRKQMQEDEQKARLLEESIARLEKEIEELENADTLPAPVKETQVAPSPGPVVPAPCPAQEDRKAEVDLNAQQTPVGTPKEKRISNTPMRMVEGSTMMNAAMYSVEITVEKDKVTGETRVLSSATVLPREHPPQGIKVYEDETKVVHAVDGTAENGIHPLSSSEVDELIHKADEVTLSEAGSAAAPETRGPSEEVVRTTPSRREITGVQAQPGEATSGPPGIQPGQEPPVTMIFMGYQNVEDEAETQKVLGLQDTITAELVVIEDAAEPKEPAPPNGSAAEPLATEGSREENQVGPEAPASDPQDLDMKKQRCKCCSIM.

The residue at position 1 (Met-1) is an N-acetylmethionine. Residues 7–104 (ETISQQERLQ…IEELENADTL (98 aa)) are a coiled coil. Disordered stretches follow at residues 22-78 (RRRQ…QEDE) and 98-133 (LENA…DRKA). Composition is skewed to basic and acidic residues over residues 25 to 41 (QAEV…DRRQ) and 69 to 78 (DMRKQMQEDE). The residue at position 116 (Ser-116) is a Phosphoserine. A compositionally biased stretch (pro residues) spans 116–125 (SPGPVVPAPC). A phosphothreonine mark is found at Thr-142 and Thr-146. Phosphoserine is present on Ser-163. Thr-244 bears the Phosphothreonine mark. Phosphoserine is present on Ser-246. 2 disordered regions span residues 246–297 (SEAG…QEPP) and 334–378 (AAEP…DMKK). The segment covering 258–273 (GPSEEVVRTTPSRREI) has biased composition (basic and acidic residues). A compositionally biased stretch (low complexity) spans 286–297 (GPPGIQPGQEPP). Phosphoserine occurs at positions 346 and 369. S-palmitoyl cysteine attachment occurs at residues Cys-381 and Cys-383. The residue at position 384 (Cys-384) is a Cysteine methyl ester. Residue Cys-384 is the site of S-farnesyl cysteine attachment. Positions 385-387 (SIM) are cleaved as a propeptide — removed in mature form.

The protein belongs to the paralemmin family. In terms of assembly, interacts with dopamine receptor DRD3. Post-translationally, phosphorylated.

It is found in the cell membrane. It localises to the cell projection. The protein resides in the filopodium membrane. Its subcellular location is the axon. The protein localises to the dendrite. It is found in the dendritic spine. It localises to the basolateral cell membrane. The protein resides in the apicolateral cell membrane. Functionally, involved in plasma membrane dynamics and cell process formation. Necessary for axonal and dendritic filopodia induction, for dendritic spine maturation and synapse formation in a palmitoylation-dependent manner. This Sus scrofa (Pig) protein is Paralemmin-1 (PALM).